The primary structure comprises 384 residues: Class V chitinase CHIT5a (384 aa).

An N-terminal signal peptide occupies residues 1–27 (MAVQKIIITPILVFLVTIFFNVSSSSS). 3 N-linked (GlcNAc...) asparagine glycosylation sites follow: Asn-29, Asn-114, and Asn-133. One can recognise a GH18 domain in the interval 39–384 (GVRSAYWPAG…SKQASNAWGH (346 aa)). The active-site Proton donor is the Glu-152. N-linked (GlcNAc...) asparagine glycosylation is found at Asn-195 and Asn-234.

It belongs to the glycosyl hydrolase 18 family. Chitinase class V subfamily.

It catalyses the reaction Random endo-hydrolysis of N-acetyl-beta-D-glucosaminide (1-&gt;4)-beta-linkages in chitin and chitodextrins.. Its pathway is glycan degradation; chitin degradation. In terms of biological role, possesses chitinase activity in vitro toward glycol chitin, carboxymethyl-chitin, colloidal chitin, and the chitin oligosaccharides (N-acetylglucosamine) (GlcNAc)6 and (GlcNAc)5. Hydrolyzes (GlcNAc)6 into (GlcNAc)4 and (GlcNAc)2, or two (GlcNAc)3 molecules. Has the capacity to inhibit hyphal growth of the fungus Trichoderma viride in an agar-plate bioassay. The sequence is that of Class V chitinase CHIT5a from Medicago truncatula (Barrel medic).